The following is a 94-amino-acid chain: Phosphoribosyl-ATP pyrophosphatase (94 aa).

This sequence belongs to the PRA-PH family.

Its subcellular location is the cytoplasm. The catalysed reaction is 1-(5-phospho-beta-D-ribosyl)-ATP + H2O = 1-(5-phospho-beta-D-ribosyl)-5'-AMP + diphosphate + H(+). Its pathway is amino-acid biosynthesis; L-histidine biosynthesis; L-histidine from 5-phospho-alpha-D-ribose 1-diphosphate: step 2/9. This is Phosphoribosyl-ATP pyrophosphatase from Pyrobaculum arsenaticum (strain DSM 13514 / JCM 11321 / PZ6).